The sequence spans 131 residues: Small ribosomal subunit protein uS8 (131 aa).

It belongs to the universal ribosomal protein uS8 family. In terms of assembly, part of the 30S ribosomal subunit. Contacts proteins S5 and S12.

Its function is as follows. One of the primary rRNA binding proteins, it binds directly to 16S rRNA central domain where it helps coordinate assembly of the platform of the 30S subunit. This Thiobacillus denitrificans (strain ATCC 25259 / T1) protein is Small ribosomal subunit protein uS8.